A 262-amino-acid chain; its full sequence is Acyl-[acyl-carrier-protein]--UDP-N-acetylglucosamine O-acyltransferase (262 aa).

It belongs to the transferase hexapeptide repeat family. LpxA subfamily. Homotrimer.

It localises to the cytoplasm. The enzyme catalyses a (3R)-hydroxyacyl-[ACP] + UDP-N-acetyl-alpha-D-glucosamine = a UDP-3-O-[(3R)-3-hydroxyacyl]-N-acetyl-alpha-D-glucosamine + holo-[ACP]. Its pathway is glycolipid biosynthesis; lipid IV(A) biosynthesis; lipid IV(A) from (3R)-3-hydroxytetradecanoyl-[acyl-carrier-protein] and UDP-N-acetyl-alpha-D-glucosamine: step 1/6. Involved in the biosynthesis of lipid A, a phosphorylated glycolipid that anchors the lipopolysaccharide to the outer membrane of the cell. The sequence is that of Acyl-[acyl-carrier-protein]--UDP-N-acetylglucosamine O-acyltransferase from Yersinia enterocolitica serotype O:8 / biotype 1B (strain NCTC 13174 / 8081).